A 1086-amino-acid polypeptide reads, in one-letter code: Receptor-type guanylate cyclase gcy-6 (1086 aa).

Residues 1 to 21 (MIGVYLRSVIFPLLFVIQTIC) form the signal peptide. Over 22 to 487 (QPPGNVFHLG…PANVFFQYIG (466 aa)) the chain is Extracellular. N-linked (GlcNAc...) asparagine glycans are attached at residues N325, N343, N387, and N427. The chain crosses the membrane as a helical span at residues 488-508 (WFIAAIIIIFFTIMGAILAFI). Residues 509-1086 (YLCHAKQQEV…APKILKKKQD (578 aa)) lie on the Cytoplasmic side of the membrane. In terms of domain architecture, Protein kinase spans 560–836 (SSTLSEVGET…NDNLMDHVFN (277 aa)). Residues 566–574 (VGETRNYLF) and K589 contribute to the ATP site. The Guanylate cyclase domain maps to 894 to 1024 (TLFFSDVVSF…DAVNTASRME (131 aa)).

The protein belongs to the adenylyl cyclase class-4/guanylyl cyclase family. As to expression, expressed in both ASEL and ASER neurons throughout late embryonic and early larval stages. In adults, expressed asymmetrically in ASE left (ASEL) sensory neuron.

The protein localises to the cell membrane. The catalysed reaction is GTP = 3',5'-cyclic GMP + diphosphate. Guanylate cyclase involved in the production of the second messenger cGMP. Regulates chemotaxis responses toward the salt ion Mg(2+) and to a lesser extent toward Cl(1-) in ASE left (ASEL) sensory neuron. This chain is Receptor-type guanylate cyclase gcy-6, found in Caenorhabditis elegans.